The primary structure comprises 433 residues: Nuclear hormone receptor family member nhr-98 (433 aa).

The segment at residues 41-116 is a DNA-binding region (nuclear receptor); that stretch reads SKKCQICENP…FGMTIDNFQF (76 aa). 2 consecutive NR C4-type zinc fingers follow at residues 44-64 and 80-104; these read CQIC…CRAC and CKTE…MQRC. The 257-residue stretch at 177-433 folds into the NR LBD domain; it reads ETPYQVSNVL…CSHPGIFLNA (257 aa).

The protein belongs to the nuclear hormone receptor family.

It is found in the nucleus. Orphan nuclear receptor. This chain is Nuclear hormone receptor family member nhr-98 (nhr-98), found in Caenorhabditis elegans.